Consider the following 268-residue polypeptide: Helix-loop-helix protein 6 (268 aa).

Residues 117–130 (QSQVQPQLPTQSQP) are compositionally biased toward low complexity. The segment at 117 to 140 (QSQVQPQLPTQSQPKPSSKASLDT) is disordered. Residues 131–140 (KPSSKASLDT) are compositionally biased toward polar residues. In terms of domain architecture, bHLH spans 173 to 225 (SSVWKRNERERCRVRNVNDGYERLRKHLPVHFDEKRISKVDTLRLAIRYIKHL).

Expressed in the gland cells of the pharynx and weakly in the pharyngeal neuron.

It is found in the nucleus. Its function is as follows. Transcription factor that regulates the development of the g2 pharyngeal gland cells and pharyngeal gland function and thereby is required for feeding. Required for the expression of a number of genes in the pharyngeal gland, possibly by binding to the E box motif (5'-CANNTG-3') in the promoter region of these genes. Positively regulates the expression of genes encoding mucin-like proteins, which lubricate the pharyngeal tract to ensure efficient passage of the bacterial food source. Exhibits pharyngeal gland-specific positive autoregulation activity. This chain is Helix-loop-helix protein 6 (hlh-6), found in Caenorhabditis elegans.